Here is a 410-residue protein sequence, read N- to C-terminus: Aminopeptidase AmpS (410 aa).

Residues E250, E316, E340, H345, H378, and D380 each contribute to the a divalent metal cation site.

Belongs to the peptidase M29 family. Co(2+) serves as cofactor. It depends on Zn(2+) as a cofactor. Requires Mg(2+) as cofactor.

Metal-dependent exopeptidase. In Bacillus subtilis (strain 168), this protein is Aminopeptidase AmpS (ampS).